The following is a 308-amino-acid chain: Reaction center protein M chain (308 aa).

3 consecutive transmembrane segments (helical) span residues 54–80 (GSLG…YQAG), 111–140 (KEGG…RAQA), and 143–168 (MGKH…RPIL). Residues histidine 183 and histidine 203 each coordinate (7R,8Z)-bacteriochlorophyll b. The helical transmembrane segment at 198–226 (FYNPFHGLSIAFLYGSALLFAMHGATILA) threads the bilayer. 2 residues coordinate Fe cation: histidine 220 and glutamate 235. Position 253 (tryptophan 253) interacts with a ubiquinone. The chain crosses the membrane as a helical span at residues 260–286 (NATMEGIHRWAIWMAVLVTLTGGIGIL). Histidine 267 lines the Fe cation pocket.

This sequence belongs to the reaction center PufL/M/PsbA/D family. As to quaternary structure, reaction center is composed of four bacteriochlorophylls, two bacteriopheophytins, two ubiquinones, one iron, and three highly hydrophobic polypeptide chains (designated L, M, and H).

Its subcellular location is the cellular chromatophore membrane. Its function is as follows. The reaction center is a membrane-bound complex that mediates the initial photochemical event in the electron transfer process of photosynthesis. This Cereibacter sphaeroides (strain ATCC 17023 / DSM 158 / JCM 6121 / CCUG 31486 / LMG 2827 / NBRC 12203 / NCIMB 8253 / ATH 2.4.1.) (Rhodobacter sphaeroides) protein is Reaction center protein M chain (pufM).